A 736-amino-acid polypeptide reads, in one-letter code: ABC transporter G family member 16 (736 aa).

The ABC transporter domain maps to 88-332; that stretch reads LDFHDLVPWR…FAGFGNPIPE (245 aa). 125-132 provides a ligand contact to ATP; sequence GASGSGKS. Helical transmembrane passes span 410–430, 449–469, 484–504, 525–545, 569–589, 590–610, and 709–729; these read SVINHGGGTLAVPAFANPFWI, LLGMRLATVIVTGFILATVFW, FFAFAMSTMFYTCADALPVFL, VLSHAIVTFPSLIFLSLAFAV, ASFWSGSSFVTFLSGVVPHVM, LGYTIVVAILAYFLLFSGFFI, and LLITVGFGFLFRILFYLCLLL. Positions 430-640 constitute an ABC transmembrane type-2 domain; that stretch reads IEIKTLTRRS…PYEAVLQNEF (211 aa).

This sequence belongs to the ABC transporter superfamily. ABCG family. Eye pigment precursor importer (TC 3.A.1.204) subfamily.

It localises to the membrane. This is ABC transporter G family member 16 (ABCG16) from Arabidopsis thaliana (Mouse-ear cress).